Here is a 218-residue protein sequence, read N- to C-terminus: ATP phosphoribosyltransferase (218 aa).

Belongs to the ATP phosphoribosyltransferase family. Short subfamily. In terms of assembly, heteromultimer composed of HisG and HisZ subunits.

It is found in the cytoplasm. The enzyme catalyses 1-(5-phospho-beta-D-ribosyl)-ATP + diphosphate = 5-phospho-alpha-D-ribose 1-diphosphate + ATP. It functions in the pathway amino-acid biosynthesis; L-histidine biosynthesis; L-histidine from 5-phospho-alpha-D-ribose 1-diphosphate: step 1/9. Catalyzes the condensation of ATP and 5-phosphoribose 1-diphosphate to form N'-(5'-phosphoribosyl)-ATP (PR-ATP). Has a crucial role in the pathway because the rate of histidine biosynthesis seems to be controlled primarily by regulation of HisG enzymatic activity. This is ATP phosphoribosyltransferase from Lactiplantibacillus plantarum (strain ATCC BAA-793 / NCIMB 8826 / WCFS1) (Lactobacillus plantarum).